The sequence spans 71 residues: Small ribosomal subunit protein bS21 (71 aa).

Over residues 50–59 (AAAVKRHAKK) the composition is skewed to basic residues. The segment at 50–71 (AAAVKRHAKKVQREQRRAVRLY) is disordered. Basic and acidic residues predominate over residues 60 to 71 (VQREQRRAVRLY).

Belongs to the bacterial ribosomal protein bS21 family.

The chain is Small ribosomal subunit protein bS21 from Pseudomonas entomophila (strain L48).